We begin with the raw amino-acid sequence, 126 residues long: Holo-[acyl-carrier-protein] synthase (126 aa).

2 residues coordinate Mg(2+): D9 and E58.

The protein belongs to the P-Pant transferase superfamily. AcpS family. Mg(2+) is required as a cofactor.

It is found in the cytoplasm. It carries out the reaction apo-[ACP] + CoA = holo-[ACP] + adenosine 3',5'-bisphosphate + H(+). In terms of biological role, transfers the 4'-phosphopantetheine moiety from coenzyme A to a Ser of acyl-carrier-protein. The polypeptide is Holo-[acyl-carrier-protein] synthase (Yersinia pseudotuberculosis serotype I (strain IP32953)).